Consider the following 95-residue polypeptide: Large ribosomal subunit protein bL25 (95 aa).

This sequence belongs to the bacterial ribosomal protein bL25 family. As to quaternary structure, part of the 50S ribosomal subunit; part of the 5S rRNA/L5/L18/L25 subcomplex. Contacts the 5S rRNA. Binds to the 5S rRNA independently of L5 and L18.

Its function is as follows. This is one of the proteins that binds to the 5S RNA in the ribosome where it forms part of the central protuberance. This chain is Large ribosomal subunit protein bL25, found in Shewanella putrefaciens (strain CN-32 / ATCC BAA-453).